The following is a 1888-amino-acid chain: Eukaryotic translation initiation factor 4G (1888 aa).

Disordered stretches follow at residues 1–259, 391–420, 449–662, 726–761, 838–903, 961–1042, 1083–1138, 1331–1356, 1462–1605, and 1639–1691; these read MSFN…PTTP, FDNKQSNAYADTGTSGPRPPYNLPSQTQPL, PLPS…SLQH, VAHSSSPENPGLGNVKNLDLISDDNQDTSSKEKNSE, ADVS…DGEV, AYKR…SGDR, TNVS…DPRL, GEREQEEANKVEEEGEVKQSEEEREE, KWQQ…PGDL, and RFAG…PSLP. Polar residues-rich tracts occupy residues 13–36 and 75–84; these read GYTQYRKSGRSNNFNPQRGSSGTH and VNSTDSSNAP. Basic and acidic residues predominate over residues 171-183; it reads DEQKRDQARHESF. A compositionally biased stretch (pro residues) spans 185 to 195; the sequence is PVPPMPIPLAP. Composition is skewed to polar residues over residues 211–231, 244–259, 393–405, and 458–475; these read NVGQQLQQKDTGIINQPNTGD, ASPNHPTNQTQKPTTP, NKQSNAYADTGTS, and NSQPHRFNYPVSQGSQNV. Over residues 497 to 506 the composition is skewed to basic and acidic residues; it reads PNREHTRDTH. A compositionally biased stretch (polar residues) spans 586–596; that stretch reads IKSSPVISKQF. Residues 603–630 are compositionally biased toward low complexity; the sequence is VSLESQDSSSVQSSLTASSEESELAVAH. Residues 631 to 645 are compositionally biased toward basic and acidic residues; the sequence is SEVRRENLLGSDLHK. Over residues 840-850 the composition is skewed to low complexity; sequence VSASVSSSSTV. Residues 869 to 885 show a composition bias toward polar residues; the sequence is NMSSNEVLKNVVKSDQP. The span at 963–983 shows a compositional bias: basic and acidic residues; sequence KRPEEKKETVAHSESIERTES. Positions 1048 to 1093 are EIF4E-binding; the sequence is KKYSRDFLLKFAEQFLDLPHNFEVTSDIESLMSTHTNVSHHHDRDP. Residues 1109–1124 show a composition bias toward basic and acidic residues; that stretch reads RLDRRGSNLVDDDRWS. The MIF4G domain occupies 1239–1462; that stretch reads QRQLKAILNK…KDAIDLRKNK (224 aa). 2 stretches are compositionally biased toward basic and acidic residues: residues 1467–1484 and 1661–1674; these read RKVEGPKKIEEVHRDAAQ and KDLRHSGRSFDRSR. In terms of domain architecture, MI spans 1700 to 1824; it reads RLQQLSLTAI…SLREVADLIC (125 aa).

This sequence belongs to the eukaryotic initiation factor 4G family. As to quaternary structure, EIF4F is a multi-subunit complex, the composition of which varies with external and internal environmental conditions. It is composed of at least EIF4A, EIF4E and EIF4G. Interacts directly with eIF4E. In higher plants two isoforms of EIF4F have been identified, named isoform EIF4F and isoform EIF(iso)4F. Isoform EIF4F has subunits p220 and p26, whereas isoform EIF(iso)4F has subunits p82 and p28.

Its function is as follows. Component of the protein complex eIF4F, which is involved in the recognition of the mRNA cap, ATP-dependent unwinding of 5'-terminal secondary structure and recruitment of mRNA to the ribosome. In Cucumis melo (Muskmelon), this protein is Eukaryotic translation initiation factor 4G.